Reading from the N-terminus, the 24-residue chain is N-acyl-L-amino acid amidohydrolase (24 aa).

It belongs to the peptidase M20 family. Homotetramer. Co(2+) serves as cofactor.

The enzyme catalyses an N-acyl-L-amino acid + H2O = an L-alpha-amino acid + a carboxylate. It carries out the reaction an N-acetyl-L-cysteine-S-conjugate + H2O = an S-substituted L-cysteine + acetate. The polypeptide is N-acyl-L-amino acid amidohydrolase (Parageobacillus thermoglucosidasius (Geobacillus thermoglucosidasius)).